The sequence spans 661 residues: Peroxisomal acyl-coenzyme A oxidase 1 (661 aa).

Ser-26 is modified (phosphoserine). Lys-65 bears the N6-acetyllysine mark. Residues Lys-89 and Lys-90 each carry the N6-succinyllysine modification. Thr-139 lines the FAD pocket. N6-succinyllysine is present on Lys-159. Gly-178 contacts FAD. At Lys-216 the chain carries N6-acetyllysine. At Lys-241 the chain carries N6-succinyllysine. N6-acetyllysine is present on residues Lys-255, Lys-267, and Lys-272. N6-succinyllysine is present on Lys-349. Glu-421 acts as the Proton acceptor in catalysis. An N6-acetyllysine; alternate mark is found at Lys-437 and Lys-446. Residues Lys-437 and Lys-446 each carry the N6-succinyllysine; alternate modification. At Lys-500 the chain carries N6-acetyllysine. An N6-acetyllysine; alternate modification is found at Lys-512. Residue Lys-512 is modified to N6-succinyllysine; alternate. Lys-542 bears the N6-succinyllysine mark. At Lys-637 the chain carries N6-acetyllysine; alternate. Lys-637 bears the N6-succinyllysine; alternate mark. At Lys-643 the chain carries N6-succinyllysine. Ser-649 carries the post-translational modification Phosphoserine. Lys-652 carries the N6-acetyllysine modification. Lys-655 is subject to N6-succinyllysine. The Microbody targeting signal signature appears at 659 to 661; the sequence is SKL.

Belongs to the acyl-CoA oxidase family. As to quaternary structure, homodimer. The enzyme contains three components A, B and C, the latter two being produced from the first by a proteolytic cleavage. Interacts with LONP2. FAD serves as cofactor. In terms of tissue distribution, expressed in Schwann cells. Expressed (at protein level) in liver.

The protein resides in the peroxisome. It carries out the reaction a 2,3-saturated acyl-CoA + O2 = a (2E)-enoyl-CoA + H2O2. The catalysed reaction is hexadecanoyl-CoA + O2 = (2E)-hexadecenoyl-CoA + H2O2. It catalyses the reaction dodecanoyl-CoA + O2 = (2E)-dodecenoyl-CoA + H2O2. The enzyme catalyses octanoyl-CoA + O2 = (2E)-octenoyl-CoA + H2O2. It carries out the reaction decanoyl-CoA + O2 = (2E)-decenoyl-CoA + H2O2. The catalysed reaction is tetradecanoyl-CoA + O2 = (2E)-tetradecenoyl-CoA + H2O2. It catalyses the reaction hexadecanedioyl-CoA + O2 = (2E)-hexadecenedioyl-CoA + H2O2. The enzyme catalyses tetracosanoyl-CoA + O2 = (2E)-tetracosenoyl-CoA + H2O2. It carries out the reaction glutaryl-CoA + O2 = (2E)-glutaconyl-CoA + H2O2. The catalysed reaction is hexanoyl-CoA + O2 = (2E)-hexenoyl-CoA + H2O2. It catalyses the reaction octadecanoyl-CoA + O2 = (2E)-octadecenoyl-CoA + H2O2. The enzyme catalyses (5Z,8Z,11Z,14Z,17Z)-eicosapentaenoyl-CoA + O2 = (2E,5Z,8Z,11Z,14Z,17Z)-icosahexaenoyl-CoA + H2O2. It carries out the reaction (6Z,9Z,12Z,15Z,18Z,21Z)-tetracosahexaenoyl-CoA + O2 = (2E,6Z,9Z,12Z,15Z,18Z,21Z)-tetracosaheptaenoyl-CoA + H2O2. It participates in lipid metabolism; peroxisomal fatty acid beta-oxidation. Functionally, involved in the initial and rate-limiting step of peroxisomal beta-oxidation of straight-chain saturated and unsaturated very-long-chain fatty acids. Catalyzes the desaturation of fatty acyl-CoAs such as palmitoyl-CoA (hexadecanoyl-CoA) to 2-trans-enoyl-CoAs ((2E)-enoyl-CoAs) such as (2E)-hexadecenoyl-CoA, and donates electrons directly to molecular oxygen (O(2)), thereby producing hydrogen peroxide (H(2)O(2)). In terms of biological role, shows highest activity against medium-chain fatty acyl-CoAs. Shows optimum activity with a chain length of 10 carbons (decanoyl-CoA) in vitro. Its function is as follows. Is active against a much broader range of substrates and shows activity towards long-chain acyl-CoAs. This Rattus norvegicus (Rat) protein is Peroxisomal acyl-coenzyme A oxidase 1.